A 122-amino-acid chain; its full sequence is Large ribosomal subunit protein bL12 (122 aa).

The protein belongs to the bacterial ribosomal protein bL12 family. As to quaternary structure, homodimer. Part of the ribosomal stalk of the 50S ribosomal subunit. Forms a multimeric L10(L12)X complex, where L10 forms an elongated spine to which 2 to 4 L12 dimers bind in a sequential fashion. Binds GTP-bound translation factors.

Forms part of the ribosomal stalk which helps the ribosome interact with GTP-bound translation factors. Is thus essential for accurate translation. This chain is Large ribosomal subunit protein bL12, found in Bdellovibrio bacteriovorus (strain ATCC 15356 / DSM 50701 / NCIMB 9529 / HD100).